The primary structure comprises 144 residues: uncharacterized protein (144 aa).

An HIT domain is found at 4 to 111 (VFCAIIAGEA…LPPRNGDKLS (108 aa)). Positions 96–100 (HVHLH) match the Histidine triad motif motif.

This is an uncharacterized protein from Mycobacterium tuberculosis (strain CDC 1551 / Oshkosh).